A 294-amino-acid polypeptide reads, in one-letter code: Segregation and condensation protein A (294 aa).

The protein belongs to the ScpA family. Component of a cohesin-like complex composed of ScpA, ScpB and the Smc homodimer, in which ScpA and ScpB bind to the head domain of Smc. The presence of the three proteins is required for the association of the complex with DNA.

The protein resides in the cytoplasm. Its function is as follows. Participates in chromosomal partition during cell division. May act via the formation of a condensin-like complex containing Smc and ScpB that pull DNA away from mid-cell into both cell halves. This is Segregation and condensation protein A from Ureaplasma parvum serovar 3 (strain ATCC 700970).